The primary structure comprises 510 residues: ATP synthase subunit alpha (510 aa).

170–177 (GDRQTGKT) provides a ligand contact to ATP.

This sequence belongs to the ATPase alpha/beta chains family. As to quaternary structure, F-type ATPases have 2 components, CF(1) - the catalytic core - and CF(0) - the membrane proton channel. CF(1) has five subunits: alpha(3), beta(3), gamma(1), delta(1), epsilon(1). CF(0) has three main subunits: a(1), b(2) and c(9-12). The alpha and beta chains form an alternating ring which encloses part of the gamma chain. CF(1) is attached to CF(0) by a central stalk formed by the gamma and epsilon chains, while a peripheral stalk is formed by the delta and b chains.

Its subcellular location is the cell inner membrane. The enzyme catalyses ATP + H2O + 4 H(+)(in) = ADP + phosphate + 5 H(+)(out). In terms of biological role, produces ATP from ADP in the presence of a proton gradient across the membrane. The alpha chain is a regulatory subunit. This is ATP synthase subunit alpha from Caulobacter vibrioides (strain ATCC 19089 / CIP 103742 / CB 15) (Caulobacter crescentus).